The sequence spans 506 residues: Probable alpha-L-arabinofuranosidase B (506 aa).

The signal sequence occupies residues 1-26; that stretch reads MLSQPSRERAFVLALGLVVSSSLAAA. The segment at 27–343 is catalytic; that stretch reads APCDIYSSGG…ADIVAANYAV (317 aa). 3 disulfide bridges follow: cysteine 29/cysteine 39, cysteine 89/cysteine 94, and cysteine 184/cysteine 185. Position 227 (aspartate 227) interacts with substrate. Glutamate 229 acts as the Nucleophile in catalysis. Asparagine 230 contributes to the substrate binding site. A glycan (N-linked (GlcNAc...) asparagine) is linked at asparagine 285. Residue glycine 304 coordinates substrate. Aspartate 305 functions as the Proton donor in the catalytic mechanism. The segment at 344–506 is ABD; sequence TSLTSGPALT…VSWVISSGFA (163 aa). Cysteine 409 and cysteine 447 are oxidised to a cystine. Positions 424, 426, 427, 443, 471, 476, and 496 each coordinate substrate.

The protein belongs to the glycosyl hydrolase 54 family.

Its subcellular location is the secreted. It carries out the reaction Hydrolysis of terminal non-reducing alpha-L-arabinofuranoside residues in alpha-L-arabinosides.. Its pathway is glycan metabolism; L-arabinan degradation. Its function is as follows. Alpha-L-arabinofuranosidase involved in the degradation of arabinoxylan, a major component of plant hemicellulose. Able to hydrolyze 1,5-, 1,3- and 1,2-alpha-linkages not only in L-arabinofuranosyl oligosaccharides, but also in polysaccharides containing terminal non-reducing L-arabinofuranoses in side chains, like L-arabinan, arabinogalactan and arabinoxylan. This is Probable alpha-L-arabinofuranosidase B (abfB) from Aspergillus clavatus (strain ATCC 1007 / CBS 513.65 / DSM 816 / NCTC 3887 / NRRL 1 / QM 1276 / 107).